A 672-amino-acid chain; its full sequence is Single-strand DNA endonuclease ASTE1 (672 aa).

The segment at 349–398 is interaction with SHLD2; that stretch reads TFLHTQVENMQRPNAHRISQPIRQIIYGLLLNGPSHAEDIAQNTLPSQLL.

The protein belongs to the asteroid family. Interacts with SHLD1, SHLD2, SHLD3, RIF1 and MAD2L2/REV7.

Its function is as follows. Structure-specific DNA endonuclease that specifically cleaves single-stranded DNA and 3' overhang DNA. Contributes to the control of DNA double-strand break repair choice by antagonizing BRCA1-dependent homologous recombination (HR) and promoting non-homologous end-joining (NHEJ). Recruited to the single-stranded DNA ends by SHLD2 and cleaves the 3' exposed DNA ends, therefore inhibiting DNA end resection (necessary for HR) and promoting DNA end protection (necessary for NHEJ). The sequence is that of Single-strand DNA endonuclease ASTE1 (Aste1) from Mus musculus (Mouse).